Here is an 85-residue protein sequence, read N- to C-terminus: Small cysteine and glycine repeat-containing protein 5 (85 aa).

The interval 4 to 69 (CGCGGCGGCG…TCCSCGCGCG (66 aa)) is 10 X 2 AA repeats of CG.

This sequence belongs to the KRTAP type 28 family.

In terms of biological role, in the hair cortex, hair keratin intermediate filaments are embedded in an interfilamentous matrix, consisting of hair keratin-associated proteins (KRTAP), which are essential for the formation of a rigid and resistant hair shaft through their extensive disulfide bond cross-linking with abundant cysteine residues of hair keratins. The matrix proteins include the high-sulfur and high-glycine-tyrosine keratins. The chain is Small cysteine and glycine repeat-containing protein 5 from Homo sapiens (Human).